The primary structure comprises 662 residues: Bifunctional polymyxin resistance protein ArnA (662 aa).

The tract at residues 1-307 (MTSKAVVFAY…ELGLVEGARL (307 aa)) is formyltransferase ArnAFT. H106 serves as the catalytic Proton donor; for formyltransferase activity. (6R)-10-formyltetrahydrofolate-binding positions include R116 and 138–142 (IERAD). Residues 316 to 662 (RRTRVLILGV…EALREREAQA (347 aa)) form a dehydrogenase ArnADH region. NAD(+) is bound by residues D349 and 370–371 (DI). Residues A395, Y400, and 434-435 (TS) contribute to the UDP-alpha-D-glucuronate site. The active-site Proton acceptor; for decarboxylase activity is the E436. UDP-alpha-D-glucuronate is bound by residues R462, N493, 527 to 536 (RLVDGGAQKR), and Y614. R620 (proton donor; for decarboxylase activity) is an active-site residue.

The protein in the N-terminal section; belongs to the Fmt family. UDP-L-Ara4N formyltransferase subfamily. In the C-terminal section; belongs to the NAD(P)-dependent epimerase/dehydratase family. UDP-glucuronic acid decarboxylase subfamily. Homohexamer, formed by a dimer of trimers.

It carries out the reaction UDP-alpha-D-glucuronate + NAD(+) = UDP-beta-L-threo-pentopyranos-4-ulose + CO2 + NADH. The catalysed reaction is UDP-4-amino-4-deoxy-beta-L-arabinose + (6R)-10-formyltetrahydrofolate = UDP-4-deoxy-4-formamido-beta-L-arabinose + (6S)-5,6,7,8-tetrahydrofolate + H(+). Its pathway is nucleotide-sugar biosynthesis; UDP-4-deoxy-4-formamido-beta-L-arabinose biosynthesis; UDP-4-deoxy-4-formamido-beta-L-arabinose from UDP-alpha-D-glucuronate: step 1/3. It participates in nucleotide-sugar biosynthesis; UDP-4-deoxy-4-formamido-beta-L-arabinose biosynthesis; UDP-4-deoxy-4-formamido-beta-L-arabinose from UDP-alpha-D-glucuronate: step 3/3. It functions in the pathway bacterial outer membrane biogenesis; lipopolysaccharide biosynthesis. Its function is as follows. Bifunctional enzyme that catalyzes the oxidative decarboxylation of UDP-glucuronic acid (UDP-GlcUA) to UDP-4-keto-arabinose (UDP-Ara4O) and the addition of a formyl group to UDP-4-amino-4-deoxy-L-arabinose (UDP-L-Ara4N) to form UDP-L-4-formamido-arabinose (UDP-L-Ara4FN). The modified arabinose is attached to lipid A and is required for resistance to polymyxin and cationic antimicrobial peptides. The sequence is that of Bifunctional polymyxin resistance protein ArnA from Pseudomonas aeruginosa (strain ATCC 15692 / DSM 22644 / CIP 104116 / JCM 14847 / LMG 12228 / 1C / PRS 101 / PAO1).